The primary structure comprises 854 residues: Disrupted in schizophrenia 1 protein (854 aa).

Residues 1-18 (MPGGGPQGAPAAAGGGGV) show a composition bias toward gly residues. Disordered stretches follow at residues 1–24 (MPGGGPQGAPAAAGGGGVSHRAGS), 179–205 (SAELSSNSCSPGCGPEVPPTPPGSHSA), 221–257 (GERGEAEGCPPSREAESHCQSPQEMGAKAASLDGPHE), and 278–323 (AQAA…SGDA). The segment at 1–292 (MPGGGPQGAP…NSSRPERDMH (292 aa)) is interaction with MAP1A. Residues 197 to 203 (PTPPGSH) carry the Interaction with FBXW7 motif. Positions 285–295 (SRPERDMHSLP) are enriched in basic and acidic residues. Positions 293 to 696 (SLPDMDPGSS…LGKVWEADLE (404 aa)) are interaction with TRAF3IP1. Over residues 296–309 (DMDPGSSSSLDPSL) the composition is skewed to low complexity. Coiled-coil stretches lie at residues 366-394 (ENDDYDKAETLQQRLEDLEQEKISLHFQL), 452-505 (ITRR…CDLT), and 602-666 (WTAK…SVKE). K372 participates in a covalent cross-link: Glycyl lysine isopeptide (Lys-Gly) (interchain with G-Cter in ubiquitin). Residues 440–597 (LEPTAQDSLH…LLEAKMHAIS (158 aa)) are required for localization to punctate cytoplasmic foci. Residues 446–854 (DSLHVSITRR…MTAGVHEAQA (409 aa)) are necessary and sufficient for interaction with PCNT and localization at the centrosome. Positions 598–854 (GNHFWTAKDL…MTAGVHEAQA (257 aa)) are interaction with ATF4 and ATF5. Positions 716 to 739 (VEDERQMDDLEGAAPPIPPRLHSE) are disordered. Residues 727 to 854 (GAAPPIPPRL…MTAGVHEAQA (128 aa)) are interaction with PAFAH1B1. Residues 802–830 (SHDEDLIQSLRRELQMVKETLQAMILQLQ) are a coiled coil. Residues 802–835 (SHDEDLIQSLRRELQMVKETLQAMILQLQPAKEA) are interaction with NDEL1.

As to quaternary structure, interacts with NDEL1. Interacts with CCDC88A (via C-terminus); the interaction is direct. Interacts with GSK3B. Interacts with tubulin alpha, ACTN2, ANKHD1, ATF4, ATF5, CEP63, EIF3S3, MAP1A, NDEL1, PAFAH1B1, RANBP9, SPTBN4, SYNE1 and TRAF3IP1. Interaction with microtubules may be mediated in part by TRAF3IP1. Interacts (via C-terminal) with PCNT. Interacts with CHCHD6. Interacts with CCDC141. Interacts with FBXW7, the substrate-recognition component of a SCF (SKP1-CUL1-F-box protein) E3 ubiquitin-protein ligase complex; the interaction targets DISC1 for proteasomal degradation. Interacts with ZNF365. Interacts with ATF4; inhibiting ATF4 transcription factor activity by disrupting ATF4 dimerization and DNA-binding. Interacts with PDE4B (isoform PDE4B5). Ubiquitinated. Ubiquitination with 'Lys-48'-linked polyubiquitin chains leads to its proteasomal degradation. As to expression, ubiquitous. Highly expressed in the dentate gyrus of the hippocampus. Also expressed in the temporal and parahippocampal cortices and cells of the white matter.

It localises to the cytoplasm. The protein localises to the cytoskeleton. Its subcellular location is the mitochondrion. The protein resides in the microtubule organizing center. It is found in the centrosome. It localises to the postsynaptic density. Involved in the regulation of multiple aspects of embryonic and adult neurogenesis. Required for neural progenitor proliferation in the ventrical/subventrical zone during embryonic brain development and in the adult dentate gyrus of the hippocampus. Participates in the Wnt-mediated neural progenitor proliferation as a positive regulator by modulating GSK3B activity and CTNNB1 abundance. Plays a role as a modulator of the AKT-mTOR signaling pathway controlling the tempo of the process of newborn neurons integration during adult neurogenesis, including neuron positioning, dendritic development and synapse formation. Inhibits the activation of AKT-mTOR signaling upon interaction with CCDC88A. Regulates the migration of early-born granule cell precursors toward the dentate gyrus during the hippocampal development. Inhibits ATF4 transcription factor activity in neurons by disrupting ATF4 dimerization and DNA-binding. Plays a role, together with PCNT, in the microtubule network formation. In Homo sapiens (Human), this protein is Disrupted in schizophrenia 1 protein.